A 332-amino-acid chain; its full sequence is Biotin synthase (332 aa).

Positions 53–282 constitute a Radical SAM core domain; the sequence is HFGKKVKLNM…TKEIRISGGR (230 aa). [4Fe-4S] cluster contacts are provided by C71, C75, and C78. The [2Fe-2S] cluster site is built by C115, C147, C207, and R277.

The protein belongs to the radical SAM superfamily. Biotin synthase family. Homodimer. It depends on [4Fe-4S] cluster as a cofactor. Requires [2Fe-2S] cluster as cofactor.

It carries out the reaction (4R,5S)-dethiobiotin + (sulfur carrier)-SH + 2 reduced [2Fe-2S]-[ferredoxin] + 2 S-adenosyl-L-methionine = (sulfur carrier)-H + biotin + 2 5'-deoxyadenosine + 2 L-methionine + 2 oxidized [2Fe-2S]-[ferredoxin]. It functions in the pathway cofactor biosynthesis; biotin biosynthesis; biotin from 7,8-diaminononanoate: step 2/2. Catalyzes the conversion of dethiobiotin (DTB) to biotin by the insertion of a sulfur atom into dethiobiotin via a radical-based mechanism. The polypeptide is Biotin synthase (Bacillus cereus (strain AH187)).